We begin with the raw amino-acid sequence, 350 residues long: 3-isopropylmalate dehydrogenase (350 aa).

An NAD(+)-binding site is contributed by 76–87 (GPKWDNAPKRPE). Residues R94, R104, R132, and D217 each coordinate substrate. Mg(2+)-binding residues include D217, D241, and D245. Residue 275-287 (GSAPDIANQNIAN) coordinates NAD(+).

This sequence belongs to the isocitrate and isopropylmalate dehydrogenases family. LeuB type 1 subfamily. Homodimer. It depends on Mg(2+) as a cofactor. The cofactor is Mn(2+).

Its subcellular location is the cytoplasm. The catalysed reaction is (2R,3S)-3-isopropylmalate + NAD(+) = 4-methyl-2-oxopentanoate + CO2 + NADH. It functions in the pathway amino-acid biosynthesis; L-leucine biosynthesis; L-leucine from 3-methyl-2-oxobutanoate: step 3/4. Its function is as follows. Catalyzes the oxidation of 3-carboxy-2-hydroxy-4-methylpentanoate (3-isopropylmalate) to 3-carboxy-4-methyl-2-oxopentanoate. The product decarboxylates to 4-methyl-2 oxopentanoate. This Listeria innocua serovar 6a (strain ATCC BAA-680 / CLIP 11262) protein is 3-isopropylmalate dehydrogenase.